The primary structure comprises 374 residues: 12-oxophytodienoate reductase 2 (374 aa).

M1 carries the post-translational modification N-acetylmethionine. FMN contacts are provided by residues 33 to 35 (PLT), A66, and Q108. H185 serves as a coordination point for substrate. Y190 functions as the Proton donor in the catalytic mechanism. R237 contributes to the FMN binding site. Residue R277 coordinates substrate. Residues 305 to 307 (AGG) and 328 to 329 (GR) each bind FMN.

This sequence belongs to the NADH:flavin oxidoreductase/NADH oxidase family. The cofactor is FMN. As to expression, expressed at highest levels in roots and cotyledons, and at lower levels in leaves, shoots and flowers (sepals, petals, maturing siliques and developing pollen).

The protein localises to the cytoplasm. The enzyme catalyses (1S,2S)-OPC-8 + NADP(+) = (9S,13S,15Z)-12-oxophyto-10,15-dienoate + NADPH + H(+). It carries out the reaction a 4,5-didehydrojasmonate + NADPH + H(+) = a jasmonate + NADP(+). It participates in lipid metabolism; oxylipin biosynthesis. In terms of biological role, specifically cleaves olefinic bonds in alpha,beta-unsaturated carbonyls and may be involved in detoxification or modification of these reactive compounds. May be involved in the biosynthesis or metabolism of oxylipin signaling molecules. In vitro, reduces 9R,13R-12-oxophytodienoic acid (9R,13R-OPDA) to 9R,13R-OPC-8:0, but only poorly 9S,13S-OPDA, the natural precursor of jasmonic acid (JA). Can detoxify the explosive 2,4,6-trinitrotoluene (TNT) in vitro and in vivo by catalyzing its nitroreduction to form hydroxylamino-dinitrotoluene (HADNT). Functions in an alternative and OPR3-independent pathway for JA biosynthesis. Catalyzes the NADPH-dependent reduction of 4,5-didehydrojasmonates to jasmonates. The protein is 12-oxophytodienoate reductase 2 of Arabidopsis thaliana (Mouse-ear cress).